A 376-amino-acid polypeptide reads, in one-letter code: MAKLGPGQGLGCEAAVGLLAPSRKREYKACNKLTEGKRPLYAIGFNFLDFHYYEVFATVGGNRVTTYSCLKDGNFAILQAYIDEDKDESFYTLSWACDLDGTPLLVAAGSNGIIRVINCATEKLLKTFVGHGDSINEIRTQALKPSLIISASKDESVRLWNVHTGICILIFAGAGGHRNEVLSVDFHPSDIYRIASCGMDNTVKIWSMKEFWPYVEQSFTWTDLPSKFPTKYVQFPVLVAVVHSNYVDCTRWLGDFILSKSVDNEIVLWEPKTKEQSPGEGSIDILQKYPVPECDIWFIKFSCDFHFNQLAIGNREGKVFVWEVQSSPPVLTARLTNPQCKSAIRQTAVSFDGSTILACSEDGSIWRWDEVDHPKA.

WD repeat units follow at residues 85 to 127 (DKDE…LLKT), 130 to 170 (GHGD…CILI), 176 to 216 (GHRN…PYVE), 242 to 279 (VHSN…QSPG), 291 to 332 (VPEC…PVLT), and 339 to 376 (QCKS…HPKA).

The protein belongs to the WD repeat ESC family. In terms of assembly, interacts with EZ1. Component of the polycomb repressive complex 2 (PRC2), composed of the core PRC2 components EMF2B, EZ1 and CLF. PRC2 methylates 'Lys-27' residues of histone H3 (H3K27me3), leading to transcriptional repression of the affected target gene. In terms of tissue distribution, widely expressed.

In terms of biological role, polycomb group (PcG) protein. PcG proteins act by forming multiprotein complexes, which are required to maintain the transcriptionally repressive state of homeotic genes throughout development. PcG proteins are not required to initiate repression, but to maintain it during later stages of development. They act via the methylation of histones, rendering chromatin heritably changed in its expressibility. Involved in the regulation of seed endosperm development, grain filling and seed dormancy. FIE2-containing PcG complex in seed endosperm regulates the expression of various transcription factors by trimethylation on histone H3 'Lys-27' (H3K27me3) of target genes. Involved in the overall expression regulation of a large number of nutrient metabolism genes. Involved in the regulation of seed endosperm development. Involved in the regulation of vegetative development, particularly in stem cell maintenance in the root system, where it maintains the suppression of key differentiation regulators. The protein is Polycomb group protein FIE1 of Oryza sativa subsp. japonica (Rice).